Reading from the N-terminus, the 173-residue chain is MAKFQPKVQSEGQDDGLREKMIAVNRVTKVVKGGRILGFAALTVVGDGDGRVGMGKGKSKEVPAAVQKAMEEARRNMVKVSLKNGTIHHNVTGHHGAAVVMMAPAPKGTGIIAGGPMRAVFEVMGITDIVAKSHGSSNPYNMVRATFDALTNSTTPAEVAAKRGKTVEDLFAA.

The S5 DRBM domain occupies Leu17–Val80.

This sequence belongs to the universal ribosomal protein uS5 family. In terms of assembly, part of the 30S ribosomal subunit. Contacts proteins S4 and S8.

Functionally, with S4 and S12 plays an important role in translational accuracy. In terms of biological role, located at the back of the 30S subunit body where it stabilizes the conformation of the head with respect to the body. The chain is Small ribosomal subunit protein uS5 from Acidovorax sp. (strain JS42).